A 228-amino-acid chain; its full sequence is Cytochrome c oxidase subunit 2 (228 aa).

The Mitochondrial intermembrane segment spans residues 1–26 (MSQWFQLGLQNGNSPLMEQLIFFHDH). A helical membrane pass occupies residues 27–48 (ALLVVILITSLVGFFLAALFSN). The Mitochondrial matrix segment spans residues 49–62 (KFLHRYLLDGQAIE). The chain crosses the membrane as a helical span at residues 63–82 (TVWTVIPAIILVAIALPSIR). Residues 83–228 (LLYLIDEIHN…FLKWLELQIS (146 aa)) are Mitochondrial intermembrane-facing. Cu cation contacts are provided by His161, Cys196, Glu198, Cys200, His204, and Met207. Position 198 (Glu198) interacts with Mg(2+).

Belongs to the cytochrome c oxidase subunit 2 family. As to quaternary structure, component of the cytochrome c oxidase (complex IV, CIV), a multisubunit enzyme composed of a catalytic core of 3 subunits and several supernumerary subunits. The complex exists as a monomer or a dimer and forms supercomplexes (SCs) in the inner mitochondrial membrane with ubiquinol-cytochrome c oxidoreductase (cytochrome b-c1 complex, complex III, CIII). Cu cation is required as a cofactor.

It is found in the mitochondrion inner membrane. It catalyses the reaction 4 Fe(II)-[cytochrome c] + O2 + 8 H(+)(in) = 4 Fe(III)-[cytochrome c] + 2 H2O + 4 H(+)(out). Functionally, component of the cytochrome c oxidase, the last enzyme in the mitochondrial electron transport chain which drives oxidative phosphorylation. The respiratory chain contains 3 multisubunit complexes succinate dehydrogenase (complex II, CII), ubiquinol-cytochrome c oxidoreductase (cytochrome b-c1 complex, complex III, CIII) and cytochrome c oxidase (complex IV, CIV), that cooperate to transfer electrons derived from NADH and succinate to molecular oxygen, creating an electrochemical gradient over the inner membrane that drives transmembrane transport and the ATP synthase. Cytochrome c oxidase is the component of the respiratory chain that catalyzes the reduction of oxygen to water. Electrons originating from reduced cytochrome c in the intermembrane space (IMS) are transferred via the dinuclear copper A center (CU(A)) of subunit 2 and heme A of subunit 1 to the active site in subunit 1, a binuclear center (BNC) formed by heme A3 and copper B (CU(B)). The BNC reduces molecular oxygen to 2 water molecules using 4 electrons from cytochrome c in the IMS and 4 protons from the mitochondrial matrix. The sequence is that of Cytochrome c oxidase subunit 2 (COII) from Artemia franciscana (Brine shrimp).